The chain runs to 950 residues: Translation initiation factor IF-2 (950 aa).

Composition is skewed to basic and acidic residues over residues 128–156 (KPKV…KVEA), 165–186 (AEVK…EKKK), 200–234 (KRAE…DNRR), and 291–312 (NRRD…DGNR). A disordered region spans residues 128-352 (KPKVAEPVKK…YQNNQSSNVP (225 aa)). Composition is skewed to polar residues over residues 322–336 (NRNQ…NWNQ) and 343–352 (YQNNQSSNVP). A tr-type G domain is found at 448–619 (ERPAVVTIMG…LLVAEVQELK (172 aa)). The interval 457-464 (GHVDHGKT) is G1. A GTP-binding site is contributed by 457–464 (GHVDHGKT). The interval 482 to 486 (GITQH) is G2. The tract at residues 503–506 (DTPG) is G3. GTP-binding positions include 503 to 507 (DTPGH) and 557 to 560 (NKLD). The tract at residues 557-560 (NKLD) is G4. Residues 595–597 (SAK) form a G5 region.

Belongs to the TRAFAC class translation factor GTPase superfamily. Classic translation factor GTPase family. IF-2 subfamily.

It localises to the cytoplasm. One of the essential components for the initiation of protein synthesis. Protects formylmethionyl-tRNA from spontaneous hydrolysis and promotes its binding to the 30S ribosomal subunits. Also involved in the hydrolysis of GTP during the formation of the 70S ribosomal complex. The polypeptide is Translation initiation factor IF-2 (infB) (Lactococcus lactis subsp. cremoris (Streptococcus cremoris)).